The primary structure comprises 116 residues: Large ribosomal subunit protein uL18 (116 aa).

It belongs to the universal ribosomal protein uL18 family. In terms of assembly, part of the 50S ribosomal subunit; part of the 5S rRNA/L5/L18/L25 subcomplex. Contacts the 5S and 23S rRNAs.

This is one of the proteins that bind and probably mediate the attachment of the 5S RNA into the large ribosomal subunit, where it forms part of the central protuberance. The polypeptide is Large ribosomal subunit protein uL18 (Shewanella frigidimarina (strain NCIMB 400)).